An 846-amino-acid polypeptide reads, in one-letter code: Homeobox protein 12 (846 aa).

8 stretches are compositionally biased toward low complexity: residues Ile78–Thr94, Pro160–Ala170, Gly237–Asn249, Gln289–Pro301, Leu309–Gln321, Asn331–Asn352, Asn394–Asn443, and Asn458–Tyr482. 6 disordered regions span residues Ile78 to Ser103, Ile151 to Val177, Asn230 to Asn249, Gly286 to Pro374, Asn394 to Tyr482, and Phe515 to Phe571. Residues Asn524–Asp546 show a composition bias toward acidic residues. Residues Ser553–Ser604 are a coiled coil. A compositionally biased stretch (low complexity) spans Asn559–Asn569. A DNA-binding region (homeobox) is located at residues Asp773–Arg835.

The protein localises to the nucleus. Putative transcription factor. This chain is Homeobox protein 12 (hbx12), found in Dictyostelium discoideum (Social amoeba).